The chain runs to 81 residues: Acylphosphatase (81 aa).

An Acylphosphatase-like domain is found at 1-81 (MYIFHGRVQG…VKYNDFQIRY (81 aa)). Active-site residues include Arg14 and Asn32.

It belongs to the acylphosphatase family.

The enzyme catalyses an acyl phosphate + H2O = a carboxylate + phosphate + H(+). In Picrophilus torridus (strain ATCC 700027 / DSM 9790 / JCM 10055 / NBRC 100828 / KAW 2/3), this protein is Acylphosphatase (acyP).